The chain runs to 280 residues: MSALNLTVRVHPVVLFQVVDAFERRNADSHRVIGTLLGSVDKGVVEVTNCFCVPHKEHDDQVEAELSYALDMYELNRKVNSNESVVGWWATGNEVTNHSSVIHEYYARECNNPVHVTVDTSLQGGRMGLRAYVCIQLGVPGGKSGCMFTPIPVELTSYEPETFGLKLLQKTVGVSPAHRPKTVPPMLDLAQISEASTKLQSLLDLILKYVDDVIAHKVTPDNAVGRQLLDLIHAVPHMTHEQFTQMFNANVRDLLMVITLSQLIKTQLQLNEKLTFLPTA.

An MPN domain is found at 8–138 (VRVHPVVLFQ…LRAYVCIQLG (131 aa)).

Belongs to the eIF-3 subunit F family. Component of the eukaryotic translation initiation factor 3 (eIF-3) complex. The eIF-3 complex interacts with pix.

Its subcellular location is the cytoplasm. In terms of biological role, component of the eukaryotic translation initiation factor 3 (eIF-3) complex, which is involved in protein synthesis of a specialized repertoire of mRNAs and, together with other initiation factors, stimulates binding of mRNA and methionyl-tRNAi to the 40S ribosome. The eIF-3 complex specifically targets and initiates translation of a subset of mRNAs involved in cell proliferation. The polypeptide is Eukaryotic translation initiation factor 3 subunit F-1 (Drosophila willistoni (Fruit fly)).